The primary structure comprises 335 residues: Putative type I specificity subunit S.MpnORF89P (335 aa).

The protein belongs to the type-I restriction system S methylase family. In terms of assembly, the methyltransferase is composed of M and S polypeptides.

Functionally, the specificity (S) subunit of a type I methyltransferase (MTase); this subunit dictates DNA sequence specificity. The single R subunit has multiple frameshifts and is probably not expressed. This Mycoplasma pneumoniae (strain ATCC 29342 / M129 / Subtype 1) (Mycoplasmoides pneumoniae) protein is Putative type I specificity subunit S.MpnORF89P.